Reading from the N-terminus, the 359-residue chain is Phosphate acyltransferase (359 aa).

Belongs to the PlsX family. In terms of assembly, homodimer. Probably interacts with PlsY.

Its subcellular location is the cytoplasm. It carries out the reaction a fatty acyl-[ACP] + phosphate = an acyl phosphate + holo-[ACP]. It functions in the pathway lipid metabolism; phospholipid metabolism. Functionally, catalyzes the reversible formation of acyl-phosphate (acyl-PO(4)) from acyl-[acyl-carrier-protein] (acyl-ACP). This enzyme utilizes acyl-ACP as fatty acyl donor, but not acyl-CoA. The sequence is that of Phosphate acyltransferase from Salmonella agona (strain SL483).